Consider the following 423-residue polypeptide: MAMVVSSWRDPQDDVAGGNPGGPNPAAQAARGGGGGAGEQQQQAGSGAPHTPQTPGQPGAPATPGTAGDKGQGPPGSGQSQQHIECVVCGDKSSGKHYGQFTCEGCKSFFKRSVRRNLTYTCRANRNCPIDQHHRNQCQYCRLKKCLKVGMRREAVQRGRMPPTQPNPGQYALTNGDPLNGHCYLSGYISLLLRAEPYPTSRYGSQCMQPNNIMGIENICELAARLLFSAVEWARNIPFFPDLQITDQVSLLRLTWSELFVLNAAQCSMPLHVAPLLAAAGLHASPMSADRVVAFMDHIRIFQEQVEKLKALHVDSAEYSCLKAIVLFTSDACGLSDAAHIESLQEKSQCALEEYVRSQYPNQPSRFGKLLLRLPSLRTVSSSVIEQLFFVRLVGKTPIETLIRDMLLSGSSFNWPYMSIQCS.

Residues 1-81 (MAMVVSSWRD…QGPPGSGQSQ (81 aa)) are disordered. The segment covering 39-67 (EQQQQAGSGAPHTPQTPGQPGAPATPGTA) has biased composition (low complexity). Residues 83–158 (HIECVVCGDK…VGMRREAVQR (76 aa)) constitute a DNA-binding region (nuclear receptor). 2 NR C4-type zinc fingers span residues 86–106 (CVVCGDKSSGKHYGQFTCEGC) and 122–146 (CRANRNCPIDQHHRNQCQYCRLKKC). An NR LBD domain is found at 184–410 (YLSGYISLLL…TLIRDMLLSG (227 aa)).

Belongs to the nuclear hormone receptor family. NR2 subfamily. In terms of assembly, binds DNA as dimer; homodimer and probable heterodimer with NR2F6. Interacts with GTF2B; this interaction is direct. Interacts with COPS2.

It localises to the nucleus. Coup (chicken ovalbumin upstream promoter) transcription factor binds to the ovalbumin promoter and, in conjunction with another protein (S300-II) stimulates initiation of transcription. Binds to both direct repeats and palindromes of the 5'-AGGTCA-3' motif. Represses transcriptional activity of LHCG. The protein is COUP transcription factor 1 (NR2F1) of Homo sapiens (Human).